A 123-amino-acid chain; its full sequence is ATP synthase epsilon chain (123 aa).

A disordered region spans residues 96–123 (ESRKQSAETEHDKAVAESELRAVKRMEA).

It belongs to the ATPase epsilon chain family. In terms of assembly, F-type ATPases have 2 components, CF(1) - the catalytic core - and CF(0) - the membrane proton channel. CF(1) has five subunits: alpha(3), beta(3), gamma(1), delta(1), epsilon(1). CF(0) has three main subunits: a, b and c.

The protein resides in the cell membrane. Functionally, produces ATP from ADP in the presence of a proton gradient across the membrane. The sequence is that of ATP synthase epsilon chain from Corynebacterium jeikeium (strain K411).